The primary structure comprises 189 residues: Thymidine kinase (189 aa).

Residues 9–16 and 85–88 contribute to the ATP site; these read GTMNSGKT and DESQ. The active-site Proton acceptor is Glu-86. Positions 143, 146, 180, and 183 each coordinate Zn(2+).

This sequence belongs to the thymidine kinase family. As to quaternary structure, homotetramer.

Its subcellular location is the cytoplasm. The enzyme catalyses thymidine + ATP = dTMP + ADP + H(+). The protein is Thymidine kinase of Streptococcus pyogenes serotype M6 (strain ATCC BAA-946 / MGAS10394).